The sequence spans 78 residues: Small ribosomal subunit protein uS17 (78 aa).

This sequence belongs to the universal ribosomal protein uS17 family. Part of the 30S ribosomal subunit.

Its function is as follows. One of the primary rRNA binding proteins, it binds specifically to the 5'-end of 16S ribosomal RNA. In Parvibaculum lavamentivorans (strain DS-1 / DSM 13023 / NCIMB 13966), this protein is Small ribosomal subunit protein uS17.